The primary structure comprises 337 residues: Phenylalanine--tRNA ligase alpha subunit (337 aa).

Residue glutamate 258 participates in Mg(2+) binding.

It belongs to the class-II aminoacyl-tRNA synthetase family. Phe-tRNA synthetase alpha subunit type 1 subfamily. As to quaternary structure, tetramer of two alpha and two beta subunits. Mg(2+) serves as cofactor.

Its subcellular location is the cytoplasm. The catalysed reaction is tRNA(Phe) + L-phenylalanine + ATP = L-phenylalanyl-tRNA(Phe) + AMP + diphosphate + H(+). This chain is Phenylalanine--tRNA ligase alpha subunit, found in Burkholderia vietnamiensis (strain G4 / LMG 22486) (Burkholderia cepacia (strain R1808)).